We begin with the raw amino-acid sequence, 4814 residues long: Nonribosomal peptide synthetase SIDC (4814 aa).

The segment at proline 21–alanine 453 is adenylation 1. The Carrier 1 domain maps to aspartate 528–aspartate 601. At serine 562 the chain carries O-(pantetheine 4'-phosphoryl)serine. The interval valine 637–glutamate 1045 is condensation 1. Residues threonine 1101–valine 1488 form an adenylation 2 region. Carrier domains are found at residues glutamate 1589–histidine 1666 and serine 2134–glycine 2210. Serine 1626 and serine 2171 each carry O-(pantetheine 4'-phosphoryl)serine. Condensation regions lie at residues leucine 1706–glycine 2210 and leucine 2243–aspartate 2649. An adenylation 3 region spans residues threonine 2709–valine 3100. One can recognise a Carrier 4 domain in the interval serine 3203–serine 3280. O-(pantetheine 4'-phosphoryl)serine is present on serine 3240. Residues tyrosine 3319 to alanine 3732 are condensation 4. The 77-residue stretch at glutamate 3747–threonine 3823 folds into the Carrier 5 domain. Serine 3784 is subject to O-(pantetheine 4'-phosphoryl)serine. The interval aspartate 3857–valine 4258 is condensation 5. The 74-residue stretch at asparagine 4295 to glycine 4368 folds into the Carrier 6 domain. O-(pantetheine 4'-phosphoryl)serine is present on serine 4329. Residues glutamate 4504–aspartate 4686 are condensation 6.

This sequence belongs to the NRP synthetase family. Pantetheine 4'-phosphate serves as cofactor.

The protein operates within siderophore biosynthesis. In terms of biological role, nonribosomal peptide synthetase; part of the gene cluster that mediates the biosynthesis of at least 11 siderophores, including beauverichelin A, dimerumic acid (DA), Na-dimethyl coprogen (NADC), eleutherazine B, ferricrocin (FC), fusarinine A, fusarinine C (FsC), metachelin A, mevalonolactone, rhodotorulic acid (RA) and tenellin. This cocktail of siderophores for iron metabolism is essential for virulence, and more specifically for the fungal virulence in penetrating through the host cuticle. Siderophore synthesis is also involved in conidial germination under iron-deficient conditions. SIDC catalyzes the assembly of ferricrocin whereas SIDD catalyzes the assembly of fusarinine C. The chain is Nonribosomal peptide synthetase SIDC from Beauveria bassiana (strain ARSEF 2860) (White muscardine disease fungus).